Reading from the N-terminus, the 448-residue chain is Glutamyl-tRNA reductase 2 (448 aa).

Substrate contacts are provided by residues 50–53, Ser109, 114–116, and Gln120; these read TCER and ESD. Cys51 serves as the catalytic Nucleophile. 190–195 provides a ligand contact to NADP(+); it reads GTGQVA. The segment at 423 to 448 is disordered; it reads DQAVPAYSPQPIGNTSNAAASATPRR. Residues 433–442 show a composition bias toward polar residues; the sequence is PIGNTSNAAA.

The protein belongs to the glutamyl-tRNA reductase family. Homodimer.

The enzyme catalyses (S)-4-amino-5-oxopentanoate + tRNA(Glu) + NADP(+) = L-glutamyl-tRNA(Glu) + NADPH + H(+). It participates in porphyrin-containing compound metabolism; protoporphyrin-IX biosynthesis; 5-aminolevulinate from L-glutamyl-tRNA(Glu): step 1/2. In terms of biological role, catalyzes the NADPH-dependent reduction of glutamyl-tRNA(Glu) to glutamate 1-semialdehyde (GSA). The polypeptide is Glutamyl-tRNA reductase 2 (Nocardioides sp. (strain ATCC BAA-499 / JS614)).